A 674-amino-acid polypeptide reads, in one-letter code: MFTEKGIFPIGDGLLDVDADRLKGLLVSCPDINEIYEVEQTPFARGKFAAVRRAIHKNTGSHFAAKFLKRRRRAQSSDKEIKHEIAVLMLCEGEDNIVNLNAVHETRSDTALLLELATGGELQTILDNEECLTEAQARHCMREVLKALKFLHDRSIAHLDLKPQNILLAGERIEDGLKLCDFGISRVVCEGINVREMAGTPDYVAPEVLQYEPLSLLTDIWSVGVLTYVLLSGFSPFGGDTKQETFLNISQCALTFPDNLFGGVSPVAIDFIRRALRIKPNDRMNATGCLDHIWLKDDCSLDRQIYLQPQSDAEEEEEEDVDDDVEDEEEEEQVEEEEEETQNVEEPTTEAPQQQQQPVQQHQLAKSGQIHSKPTHNGHHRANSGGSISKIPIATSKLQSTPSSETTTAIHTLTSNSNGHVHKPTQIVTPTRRASDSDKENTYTATFVKKPVATIQLGSSNGIEDATVVATLTLFPDAPTTPKVIRKTPTGESNGSATSVKALVKKFQLEDSSGSAVARRSGGAVTSSSGLHSPTTTSVRLNSIRRASEPLTTVYKKQTSQNGCSSTSNPSSSPGSSPTTSGSTATLLIHSQRLGNSTAPASHCVAVPATATATSSASSSNSSSGKSTSAAHHLHHHHMHHHHHHHHHHVVIAAKNAAAVAATNNLSLDQGIIC.

In terms of domain architecture, Protein kinase spans 37 to 295 (EVEQTPFARG…ATGCLDHIWL (259 aa)). Residues 43-51 (FARGKFAAV) and Lys66 contribute to the ATP site. Asp160 (proton acceptor) is an active-site residue. Disordered stretches follow at residues 308 to 388 (QPQS…GGSI), 412 to 440 (TLTS…SDKE), 511 to 583 (DSSG…TSGS), and 614 to 650 (TSSA…HHHV). The segment covering 312–343 (DAEEEEEEDVDDDVEDEEEEEQVEEEEEETQN) has biased composition (acidic residues). A compositionally biased stretch (low complexity) spans 352 to 363 (PQQQQQPVQQHQ). The segment covering 373-382 (KPTHNGHHRA) has biased composition (basic residues). Residues Ser384, Ser387, Ser435, Ser437, and Ser521 each carry the phosphoserine modification. A compositionally biased stretch (low complexity) spans 512–525 (SSGSAVARRSGGAV). Polar residues-rich tracts occupy residues 526 to 541 (TSSS…SVRL) and 555 to 564 (YKKQTSQNGC). Low complexity-rich tracts occupy residues 565–583 (SSTS…TSGS) and 614–631 (TSSA…TSAA). Basic residues predominate over residues 632–650 (HHLHHHHMHHHHHHHHHHV).

Belongs to the protein kinase superfamily. Ser/Thr protein kinase family.

It carries out the reaction L-seryl-[protein] + ATP = O-phospho-L-seryl-[protein] + ADP + H(+). The catalysed reaction is L-threonyl-[protein] + ATP = O-phospho-L-threonyl-[protein] + ADP + H(+). The protein is Death-associated protein kinase related (Drak) of Drosophila melanogaster (Fruit fly).